The chain runs to 430 residues: Probable aspartic-type endopeptidase TRV_06366 (430 aa).

An N-terminal signal peptide occupies residues M1–S17. Residues K18 to E87 constitute a propeptide, activation peptide. The segment at H61–D104 is disordered. The segment covering E87–D104 has biased composition (basic and acidic residues). In terms of domain architecture, Peptidase A1 spans F109–A427. D125 is an active-site residue. N306 carries an N-linked (GlcNAc...) asparagine glycan. D314 is a catalytic residue.

It belongs to the peptidase A1 family.

The protein localises to the secreted. Its function is as follows. Probable secreted aspartic-type endopeptidase which contributes to virulence. The sequence is that of Probable aspartic-type endopeptidase TRV_06366 from Trichophyton verrucosum (strain HKI 0517).